We begin with the raw amino-acid sequence, 778 residues long: Preaspterpenacid I synthase sttA (778 aa).

Residues 4 to 359 (ISDVMKHCVP…RYHRTDLATT (356 aa)) form a sesterterpenoid synthase region. D105 contacts Mg(2+). D105 is a substrate binding site. Positions 211–214 (RVNE) are substrate. N255 serves as a coordination point for substrate. Substrate regions lie at residues 259-263 (SFPKE) and 350-351 (RY). Positions 360–774 (AEDRATLIGK…RMMLLGMGPK (415 aa)) are geranylfarneyl diphosphate synthase. Residues 423 to 445 (AFKKSNPRNGKQNGTEGSKGTFT) form a disordered region. Polar residues predominate over residues 429–445 (PRNGKQNGTEGSKGTFT). 3 residues coordinate isopentenyl diphosphate: K493, R496, and H525. Residues D532 and D536 each contribute to the Mg(2+) site. R541 is a dimethylallyl diphosphate binding site. Isopentenyl diphosphate is bound at residue R542. Residues K619, T620, Q657, N664, and K674 each coordinate dimethylallyl diphosphate.

It in the N-terminal section; belongs to the terpene synthase family. The protein in the C-terminal section; belongs to the FPP/GGPP synthase family.

The catalysed reaction is 4 isopentenyl diphosphate + dimethylallyl diphosphate = (2E,6E,10E,14E)-geranylfarnesyl diphosphate + 4 diphosphate. It carries out the reaction (2E,6E,10E,14E)-geranylfarnesyl diphosphate + H2O = preaspterpenacid acid I + diphosphate. The protein operates within secondary metabolite biosynthesis; terpenoid biosynthesis. Functionally, sesterterpenoid synthase; part of the gene cluster that mediates the biosynthesis of aspterpenacids. Performs both prenyl transferase and terpene cyclase activity, converting isopentenyl diphosphate and dimethylallyl diphosphate into geranylfarnesyl diphosphate (GFPP) and then converting GFPP into preaspterpenacid I. C22-oxidative modification of preaspterpenacid I by the cytochrome P450 monooxygenase sttB then leads to preaspterpenacid II. It has still to be determined how preaspterpenacid II is further modified to produce aspterpenacids. This chain is Preaspterpenacid I synthase sttA, found in Aspergillus terreus.